A 333-amino-acid polypeptide reads, in one-letter code: Dioxygenase cnsJ (333 aa).

H153, D155, and H235 together coordinate Fe cation. Residues 309–333 (NAQPEGEDDGGMKPNEGEHVVEAQI) form a disordered region. A compositionally biased stretch (basic and acidic residues) spans 323–333 (NEGEHVVEAQI).

This sequence belongs to the PhyH family. As to quaternary structure, homodimer. The cofactor is Fe cation.

Its pathway is alkaloid biosynthesis. Functionally, dioxygenase; part of the gene cluster that mediates the biosynthesis of communesins, a prominent class of indole alkaloids with great potential as pharmaceuticals. Communesins are biosynthesized by the coupling of tryptamine and aurantioclavine, two building blocks derived from L-tryptophan. The L-tryptophan decarboxylase cnsB converts L-tryptophan to tryptamine, whereas the tryptophan dimethylallyltransferase cnsF converts L-tryptophan to 4-dimethylallyl tryptophan which is further transformed to aurantioclavine by the aurantioclavine synthase cnsA, probably aided by the catalase cnsD. The cytochrome P450 monooxygenase cnsC catalyzes the heterodimeric coupling between the two different indole moieties, tryptamine and aurantioclavine, to construct vicinal quaternary stereocenters and yield the heptacyclic communesin scaffold. The O-methyltransferase cnsE then methylates the communesin scaffold to produce communesin K, the simplest characterized communesin that contains the heptacyclic core. The dioxygenase cnsJ converts communesin K into communesin I. Acylation to introduce the hexadienyl group at position N16 of communesin I by the acyltransferase cnsK leads to the production of communesin B. The hexadienyl group is produced by the highly reducing polyketide synthase cnsI, before being hydrolytically removed from cnsI by the serine hydrolase cnsH, converted into hexadienyl-CoA by the CoA ligase cnsG, and then transferred to communesin I by cnsK. Surprisingly, cnsK may also be a promiscuous acyltransferase that can tolerate a range of acyl groups, including acetyl-, propionyl-, and butyryl-CoA, which lead to communesins A, G and H respectively. The roles of the alpha-ketoglutarate-dependent dioxygenases cnsM and cnsP have still to be determined. The chain is Dioxygenase cnsJ from Penicillium expansum (Blue mold rot fungus).